The following is a 318-amino-acid chain: tRNA dimethylallyltransferase (318 aa).

An ATP-binding site is contributed by 28–35 (GPTGAGKS). Position 30–35 (30–35 (TGAGKS)) interacts with substrate. The tract at residues 53–56 (DSMQ) is interaction with substrate tRNA.

This sequence belongs to the IPP transferase family. Monomer. Mg(2+) serves as cofactor.

It catalyses the reaction adenosine(37) in tRNA + dimethylallyl diphosphate = N(6)-dimethylallyladenosine(37) in tRNA + diphosphate. Its function is as follows. Catalyzes the transfer of a dimethylallyl group onto the adenine at position 37 in tRNAs that read codons beginning with uridine, leading to the formation of N6-(dimethylallyl)adenosine (i(6)A). The chain is tRNA dimethylallyltransferase from Parafrankia sp. (strain EAN1pec).